A 280-amino-acid polypeptide reads, in one-letter code: Vitamin B12-binding protein (280 aa).

The signal sequence occupies residues 1-27; it reads MMPLGLFPLPRAAAVLLISLLTLPAQA. Residues 30-277 form the Fe/B12 periplasmic-binding domain; it reads RVISLSPSTT…QMASIPTPVA (248 aa). Cyanocob(III)alamin is bound at residue Tyr57. Residues Cys190 and Cys266 are joined by a disulfide bond.

Belongs to the BtuF family. The complex is composed of two ATP-binding proteins (BtuD), two transmembrane proteins (BtuC) and a solute-binding protein (BtuF).

The protein localises to the periplasm. Functionally, part of the ABC transporter complex BtuCDF involved in vitamin B12 import. Binds vitamin B12 and delivers it to the periplasmic surface of BtuC. The chain is Vitamin B12-binding protein from Yersinia pseudotuberculosis serotype O:3 (strain YPIII).